The chain runs to 214 residues: Pyridoxine/pyridoxamine 5'-phosphate oxidase (214 aa).

Substrate-binding positions include 10–13 (RLNY) and K68. Residues 63–68 (RMVLLK), 78–79 (YT), K85, and Q107 contribute to the FMN site. The substrate site is built by Y125, R129, and S133. FMN contacts are provided by residues 142–143 (QS) and W187. 193-195 (RLH) is a binding site for substrate. Position 197 (R197) interacts with FMN.

The protein belongs to the pyridoxamine 5'-phosphate oxidase family. As to quaternary structure, homodimer. The cofactor is FMN.

It catalyses the reaction pyridoxamine 5'-phosphate + O2 + H2O = pyridoxal 5'-phosphate + H2O2 + NH4(+). The catalysed reaction is pyridoxine 5'-phosphate + O2 = pyridoxal 5'-phosphate + H2O2. It functions in the pathway cofactor metabolism; pyridoxal 5'-phosphate salvage; pyridoxal 5'-phosphate from pyridoxamine 5'-phosphate: step 1/1. Its pathway is cofactor metabolism; pyridoxal 5'-phosphate salvage; pyridoxal 5'-phosphate from pyridoxine 5'-phosphate: step 1/1. Functionally, catalyzes the oxidation of either pyridoxine 5'-phosphate (PNP) or pyridoxamine 5'-phosphate (PMP) into pyridoxal 5'-phosphate (PLP). The protein is Pyridoxine/pyridoxamine 5'-phosphate oxidase of Synechocystis sp. (strain ATCC 27184 / PCC 6803 / Kazusa).